Reading from the N-terminus, the 227-residue chain is UPF0173 metal-dependent hydrolase BCB4264_A4722 (227 aa).

This sequence belongs to the UPF0173 family.

This is UPF0173 metal-dependent hydrolase BCB4264_A4722 from Bacillus cereus (strain B4264).